The primary structure comprises 315 residues: Acetaldehyde dehydrogenase 2 (315 aa).

An NAD(+)-binding site is contributed by 13–16; that stretch reads SGNI. Catalysis depends on cysteine 131, which acts as the Acyl-thioester intermediate. NAD(+) contacts are provided by residues 162 to 170 and asparagine 290; that span reads SAGPGTRAN.

It belongs to the acetaldehyde dehydrogenase family.

It carries out the reaction acetaldehyde + NAD(+) + CoA = acetyl-CoA + NADH + H(+). The sequence is that of Acetaldehyde dehydrogenase 2 from Pseudomonas putida (strain W619).